The sequence spans 29 residues: Kappa-theraphotoxin-Ps1a (29 aa).

Disulfide bonds link Cys2–Cys16, Cys9–Cys21, and Cys15–Cys25. Ile29 carries the isoleucine amide modification.

Belongs to the neurotoxin 30 (phrixotoxin) family. Expressed by the venom gland.

It is found in the secreted. Functionally, potent and specific blocker of Kv4.2/KCND2 (IC(50)=5 nM) and Kv4.3/KCND3 (IC(50)=28 nM) potassium channels. Acts by altering the gating properties of these channels. Also shows moderate inhibition on human voltage-gated sodium channel Nav1.7/SCN9A activation (IC(50)=423 nM). In Paraphysa scrofa (Chilean copper tarantula), this protein is Kappa-theraphotoxin-Ps1a.